A 2081-amino-acid polypeptide reads, in one-letter code: RNA1 polyprotein (2081 aa).

2 consecutive transmembrane segments (helical) span residues Ile-481–Val-501 and Ile-515–Ser-535. The SF3 helicase domain occupies Leu-714 to Val-881. ATP is bound at residue Gly-741–Ser-748. Positions Gly-877–Tyr-900 are disordered. Residues Gly-1166–Phe-1388 enclose the Peptidase C3 domain. Residues His-1210, Glu-1255, and Cys-1348 each act as for picornain 3C-like protease activity in the active site. One can recognise a RdRp catalytic domain in the interval Ala-1679 to Tyr-1810.

Its subcellular location is the host membrane. The enzyme catalyses RNA(n) + a ribonucleoside 5'-triphosphate = RNA(n+1) + diphosphate. Functionally, picornain 3C-like protease is a thiol protease that probably cleaves the polyprotein. This is RNA1 polyprotein from Citrus unshiu (Satsuma mandarin).